Consider the following 92-residue polypeptide: Promotilin (92 aa).

Residues 12–49 (RMQEKERNRGQKKSLGLQQRSEEVGSLDPTEAAEEEGK) form a disordered region.

Belongs to the motilin family.

The protein resides in the secreted. Plays an important role in the regulation of interdigestive gastrointestinal motility and indirectly causes rhythmic contraction of duodenal and colonic smooth muscle. In Equus caballus (Horse), this protein is Promotilin (MLN).